The sequence spans 157 residues: MTQDTKTDFQKPSDNDLRERLTPIQYQVTQHEGTERAFTGEYWDHDEDGIYVDVVSGEPLFSSLDKYDAGCGWPSFTQPIPDVALTENTDYKIGYARTEVRSASADSHLGHVFPDGPRDRGGLRYCINSAALRFVPLSELDAQGYGQYRALFEGRQG.

The region spanning 14–137 (DNDLRERLTP…NSAALRFVPL (124 aa)) is the MsrB domain. C126 (nucleophile) is an active-site residue.

It belongs to the MsrB Met sulfoxide reductase family.

The enzyme catalyses L-methionyl-[protein] + [thioredoxin]-disulfide + H2O = L-methionyl-(R)-S-oxide-[protein] + [thioredoxin]-dithiol. This is Peptide methionine sulfoxide reductase MsrB from Deinococcus radiodurans (strain ATCC 13939 / DSM 20539 / JCM 16871 / CCUG 27074 / LMG 4051 / NBRC 15346 / NCIMB 9279 / VKM B-1422 / R1).